Consider the following 489-residue polypeptide: Interferon gamma receptor 1 (489 aa).

An N-terminal signal peptide occupies residues 1-17 (MALLFLLPLVMQGVSRA). Over 18–245 (EMGTADLGPS…ITIFNSSIKG (228 aa)) the chain is Extracellular. Asn34, Asn79, and Asn86 each carry an N-linked (GlcNAc...) asparagine glycan. An intrachain disulfide couples Cys77 to Cys85. Residues Cys122 and Cys167 are joined by a disulfide bond. The N-linked (GlcNAc...) asparagine glycan is linked to Asn179. Intrachain disulfides connect Cys195/Cys200 and Cys214/Cys235. N-linked (GlcNAc...) asparagine glycosylation occurs at Asn240. Residues 246 to 266 (SLWIPVVAALLLFLVLSLVFI) traverse the membrane as a helical segment. At 267–489 (CFYIKKINPL…RPTEDSKEFS (223 aa)) the chain is on the cytoplasmic side. Residues 329 to 437 (ATVPGMHTED…SEFPPNNKGE (109 aa)) form a disordered region. Residues 335-348 (HTEDNPGKVEHTEE) are compositionally biased toward basic and acidic residues. The segment covering 349-360 (LSSITEVVTTEE) has biased composition (polar residues). Residue Ser369 is modified to Phosphoserine. Thr372 is subject to Phosphothreonine. Ser378 is modified (phosphoserine). Residues 379–391 (SSPLSSNQSEPGS) show a composition bias toward low complexity. Basic and acidic residues predominate over residues 401–412 (NCSESDHSRNGF). Ser403 carries the post-translational modification Phosphoserine. Over residues 415–429 (DSSCLESHSSLSDSE) the composition is skewed to low complexity. Tyr457 carries the phosphotyrosine modification.

It belongs to the type II cytokine receptor family. Monomer. Heterodimer with IFNGR2, to form the IFNG receptor complex. Interacts with JAK1. Interacts (when phosphorylated) with STAT1. Interacts with SOCS1. Phosphorylated at Ser/Thr residues. Phosphorylation of Tyr-457 is required for IFNG receptor signal transduction. Influenza virus infection leads to phosphorylation in a CSNK1A1-dependent manner. In terms of processing, ubiquitinated after phosphorylation in a CSNK1A1-dependent manner, leading to the lysosome-dependent degradation. Proteasomally degraded through 'Lys-48'-mediated ubiquitination. Ubiquitination is necessary for efficient IFNGR1 signaling.

Its subcellular location is the cell membrane. In terms of biological role, receptor subunit for interferon gamma/INFG that plays crucial roles in antimicrobial, antiviral, and antitumor responses by activating effector immune cells and enhancing antigen presentation. Associates with transmembrane accessory factor IFNGR2 to form a functional receptor. Upon ligand binding, the intracellular domain of IFNGR1 opens out to allow association of downstream signaling components JAK1 and JAK2. In turn, activated JAK1 phosphorylates IFNGR1 to form a docking site for STAT1. Subsequent phosphorylation of STAT1 leads to dimerization, translocation to the nucleus, and stimulation of target gene transcription. STAT3 can also be activated in a similar manner although activation seems weaker. IFNGR1 intracellular domain phosphorylation also provides a docking site for SOCS1 that regulates the JAK-STAT pathway by competing with STAT1 binding to IFNGR1. The chain is Interferon gamma receptor 1 from Homo sapiens (Human).